The sequence spans 292 residues: 4-hydroxy-tetrahydrodipicolinate synthase (292 aa).

Residue threonine 45 coordinates pyruvate. Tyrosine 133 serves as the catalytic Proton donor/acceptor. The Schiff-base intermediate with substrate role is filled by lysine 161. Pyruvate is bound at residue isoleucine 203.

Belongs to the DapA family. In terms of assembly, homotetramer; dimer of dimers.

The protein localises to the cytoplasm. The enzyme catalyses L-aspartate 4-semialdehyde + pyruvate = (2S,4S)-4-hydroxy-2,3,4,5-tetrahydrodipicolinate + H2O + H(+). It participates in amino-acid biosynthesis; L-lysine biosynthesis via DAP pathway; (S)-tetrahydrodipicolinate from L-aspartate: step 3/4. Catalyzes the condensation of (S)-aspartate-beta-semialdehyde [(S)-ASA] and pyruvate to 4-hydroxy-tetrahydrodipicolinate (HTPA). The protein is 4-hydroxy-tetrahydrodipicolinate synthase of Aromatoleum aromaticum (strain DSM 19018 / LMG 30748 / EbN1) (Azoarcus sp. (strain EbN1)).